The sequence spans 446 residues: Oxysterols receptor LXR-beta (446 aa).

The segment covering 1 to 28 (MSSPTSSLDTPLPGNGSPQPSTSSTSPT) has biased composition (low complexity). Positions 1–69 (MSSPTSSLDT…PERKRKKGPA (69 aa)) are disordered. Positions 1-76 (MSSPTSSLDT…GPAPKMLGHE (76 aa)) are transactivation AF-1; required for ligand-independent transactivation function. The segment at residues 75-152 (HELCRVCGDK…AGMREQCVLS (78 aa)) is a DNA-binding region (nuclear receptor). NR C4-type zinc fingers lie at residues 78-98 (CRVC…CEGC) and 116-140 (CRGS…LRKC). A disordered region spans residues 160-201 (KIQKQQQQQPPPPTEPASGSSARPAASPGTSEASSQGSGEGE). Low complexity predominate over residues 175–196 (PASGSSARPAASPGTSEASSQG). A transactivation AF-2; required for ligand-dependent transactivation function; mediates interaction with CCAR2 region spans residues 205 to 446 (LTAAQELMIQ…LLSEIWDVHE (242 aa)). Positions 208-446 (AQELMIQQLV…LLSEIWDVHE (239 aa)) constitute an NR LBD domain. Residues Lys-395 and Lys-433 each participate in a glycyl lysine isopeptide (Lys-Gly) (interchain with G-Cter in SUMO2) cross-link.

It belongs to the nuclear hormone receptor family. NR1 subfamily. In terms of assembly, forms a heterodimer with RXR. Interacts with CCAR2 (via N-terminus) in a ligand-independent manner. Interacts (when sumoylated) with GPS2; interaction with GPS2 onto hepatic acute phase protein promoters prevents N-Cor corepressor complex dissociation. Interacts with ABCA12 and ABCA1; this interaction is required for ABCA1 localization to the cell surface and is necessary for its normal activity and stability. In terms of processing, sumoylated by SUMO2 at Lys-395 and Lys-433 during the hepatic acute phase response, leading to promote interaction with GPS2 and prevent N-Cor corepressor complex dissociation.

It localises to the nucleus. In terms of biological role, nuclear receptor that exhibits a ligand-dependent transcriptional activation activity. Binds preferentially to double-stranded oligonucleotide direct repeats having the consensus half-site sequence 5'-AGGTCA-3' and 4-nt spacing (DR-4). Regulates cholesterol uptake through MYLIP-dependent ubiquitination of LDLR, VLDLR and LRP8; DLDLR and LRP8. Interplays functionally with RORA for the regulation of genes involved in liver metabolism. Induces LPCAT3-dependent phospholipid remodeling in endoplasmic reticulum (ER) membranes of hepatocytes, driving SREBF1 processing and lipogenesis. Via LPCAT3, triggers the incorporation of arachidonate into phosphatidylcholines of ER membranes, increasing membrane dynamics and enabling triacylglycerols transfer to nascent very low-density lipoprotein (VLDL) particles. Via LPCAT3 also counteracts lipid-induced ER stress response and inflammation, likely by modulating SRC kinase membrane compartmentalization and limiting the synthesis of lipid inflammatory mediators. Plays an anti-inflammatory role during the hepatic acute phase response by acting as a corepressor: inhibits the hepatic acute phase response by preventing dissociation of the N-Cor corepressor complex. This chain is Oxysterols receptor LXR-beta (Nr1h2), found in Rattus norvegicus (Rat).